The chain runs to 311 residues: tRNA dimethylallyltransferase (311 aa).

10–17 (GPTASGKT) serves as a coordination point for ATP. Residue 12-17 (TASGKT) coordinates substrate. 3 interaction with substrate tRNA regions span residues 35 to 38 (DSAL), 159 to 163 (QRINR), and 240 to 245 (RCVGYR).

This sequence belongs to the IPP transferase family. As to quaternary structure, monomer. Mg(2+) is required as a cofactor.

The enzyme catalyses adenosine(37) in tRNA + dimethylallyl diphosphate = N(6)-dimethylallyladenosine(37) in tRNA + diphosphate. Functionally, catalyzes the transfer of a dimethylallyl group onto the adenine at position 37 in tRNAs that read codons beginning with uridine, leading to the formation of N6-(dimethylallyl)adenosine (i(6)A). This Haemophilus influenzae (strain PittEE) protein is tRNA dimethylallyltransferase.